A 368-amino-acid polypeptide reads, in one-letter code: DNA replication and repair protein RecF (368 aa).

30–37 serves as a coordination point for ATP; that stretch reads GDNGAGKT.

The protein belongs to the RecF family.

The protein resides in the cytoplasm. Its function is as follows. The RecF protein is involved in DNA metabolism; it is required for DNA replication and normal SOS inducibility. RecF binds preferentially to single-stranded, linear DNA. It also seems to bind ATP. This chain is DNA replication and repair protein RecF, found in Xanthomonas axonopodis pv. citri (strain 306).